Reading from the N-terminus, the 416-residue chain is Phosphatidylserine decarboxylase proenzyme, mitochondrial (416 aa).

Residues 1-67 (MPGKSTRPLP…GRLHFPQLAL (67 aa)) are Mitochondrial matrix-facing. A helical transmembrane segment spans residues 68–86 (RRRLGQLSCMSKPALKLRS). Residues 87–416 (WPLTVLYYLL…IRFGEALGSL (330 aa)) lie on the Mitochondrial intermembrane side of the membrane. Catalysis depends on charge relay system; for autoendoproteolytic cleavage activity residues Asp-198, His-274, and Ser-385. Ser-385 (schiff-base intermediate with substrate; via pyruvic acid; for decarboxylase activity) is an active-site residue. Pyruvic acid (Ser); by autocatalysis is present on Ser-385.

This sequence belongs to the phosphatidylserine decarboxylase family. PSD-B subfamily. Eukaryotic type I sub-subfamily. In terms of assembly, heterodimer of a large membrane-associated beta subunit and a small pyruvoyl-containing alpha subunit. Requires pyruvate as cofactor. In terms of processing, is synthesized initially as an inactive proenzyme. Formation of the active enzyme involves a self-maturation process in which the active site pyruvoyl group is generated from an internal serine residue via an autocatalytic post-translational modification. Two non-identical subunits are generated from the proenzyme in this reaction, and the pyruvate is formed at the N-terminus of the alpha chain, which is derived from the carboxyl end of the proenzyme. The autoendoproteolytic cleavage occurs by a canonical serine protease mechanism, in which the side chain hydroxyl group of the serine supplies its oxygen atom to form the C-terminus of the beta chain, while the remainder of the serine residue undergoes an oxidative deamination to produce ammonia and the pyruvoyl prosthetic group on the alpha chain. During this reaction, the Ser that is part of the protease active site of the proenzyme becomes the pyruvoyl prosthetic group, which constitutes an essential element of the active site of the mature decarboxylase.

The protein resides in the mitochondrion inner membrane. It localises to the cytoplasm. Its subcellular location is the lipid droplet. The enzyme catalyses a 1,2-diacyl-sn-glycero-3-phospho-L-serine + H(+) = a 1,2-diacyl-sn-glycero-3-phosphoethanolamine + CO2. Its pathway is phospholipid metabolism; phosphatidylethanolamine biosynthesis. Its function is as follows. Catalyzes the formation of phosphatidylethanolamine (PtdEtn) from phosphatidylserine (PtdSer). Plays a central role in phospholipid metabolism and in the interorganelle trafficking of phosphatidylserine. May be involved in lipid droplet biogenesis at the endoplasmic reticulum membrane. In Bos taurus (Bovine), this protein is Phosphatidylserine decarboxylase proenzyme, mitochondrial.